A 319-amino-acid polypeptide reads, in one-letter code: sn-1-specific diacylglycerol lipase ABHD11 (319 aa).

The transit peptide at 1–28 directs the protein to the mitochondrion; that stretch reads MTLKLAVLRQIFQGSKGWHLWQHWRAFY. Residues 69 to 304 form the AB hydrolase-1 domain; it reads PPLVLLHGLF…GAGHWVHADK (236 aa). Active-site charge relay system residues include Ser-143, Glu-239, and His-298.

Belongs to the AB hydrolase superfamily. In terms of processing, phosphorylated.

It is found in the mitochondrion. The protein localises to the mitochondrion matrix. The enzyme catalyses 1-octadecanoyl-2-(5Z,8Z,11Z,14Z-eicosatetraenoyl)-sn-glycerol + H2O = 2-(5Z,8Z,11Z,14Z-eicosatetraenoyl)-glycerol + octadecanoate + H(+). It carries out the reaction a 1,2-diacyl-sn-glycerol + H2O = a 2-acylglycerol + a fatty acid + H(+). The catalysed reaction is a 1,3-diacyl-sn-glycerol + H2O = a 1-acyl-sn-glycerol + a fatty acid + H(+). It catalyses the reaction 1-octadecanoyl-2-(9Z-octadecenoyl)-sn-glycerol + H2O = 2-(9Z-octadecenoyl)-glycerol + octadecanoate + H(+). The enzyme catalyses 1-octadecanoyl-2-(4Z,7Z,10Z,13Z,16Z,19Z-docosahexaenoyl)-sn-glycerol + H2O = 2-(4Z,7Z,10Z,13Z,16Z,19Z-docosahexaenoyl)-glycerol + octadecanoate + H(+). It carries out the reaction 1,2-didecanoylglycerol + H2O = decanoylglycerol + decanoate + H(+). In terms of biological role, catalyzes the hydrolysis of diacylglycerol in vitro and may function as a key regulator in lipid metabolism, namely by regulating the intracellular levels of diacylglycerol. 1,2-diacyl-sn-glycerols are the preferred substrate over 1,3-diacyl-sn-glycerols. The enzyme hydrolyzes stearate in preference to palmitate from the sn-1 position of 1,2-diacyl-sn-glycerols. The chain is sn-1-specific diacylglycerol lipase ABHD11 from Xenopus tropicalis (Western clawed frog).